The primary structure comprises 285 residues: Dermonecrotic toxin LlSicTox-alphaIII1ii (285 aa).

The active site involves His12. Positions 32 and 34 each coordinate Mg(2+). Catalysis depends on His47, which acts as the Nucleophile. Residues Cys51 and Cys57 are joined by a disulfide bond. Asp91 contributes to the Mg(2+) binding site.

Belongs to the arthropod phospholipase D family. Class I subfamily. Mg(2+) serves as cofactor. As to expression, expressed by the venom gland.

It is found in the secreted. The enzyme catalyses an N-(acyl)-sphingosylphosphocholine = an N-(acyl)-sphingosyl-1,3-cyclic phosphate + choline. The catalysed reaction is an N-(acyl)-sphingosylphosphoethanolamine = an N-(acyl)-sphingosyl-1,3-cyclic phosphate + ethanolamine. It carries out the reaction a 1-acyl-sn-glycero-3-phosphocholine = a 1-acyl-sn-glycero-2,3-cyclic phosphate + choline. It catalyses the reaction a 1-acyl-sn-glycero-3-phosphoethanolamine = a 1-acyl-sn-glycero-2,3-cyclic phosphate + ethanolamine. Its function is as follows. Dermonecrotic toxins cleave the phosphodiester linkage between the phosphate and headgroup of certain phospholipids (sphingolipid and lysolipid substrates), forming an alcohol (often choline) and a cyclic phosphate. This toxin acts on sphingomyelin (SM) with high activity (56.8 U/mg). It may also act on ceramide phosphoethanolamine (CPE), lysophosphatidylcholine (LPC) and lysophosphatidylethanolamine (LPE), but not on lysophosphatidylserine (LPS), and lysophosphatidylglycerol (LPG). It acts by transphosphatidylation, releasing exclusively cyclic phosphate products as second products. Induces dermonecrosis, hemolysis, increased vascular permeability, edema, inflammatory response, and platelet aggregation. Is lethal to mice. The chain is Dermonecrotic toxin LlSicTox-alphaIII1ii from Loxosceles laeta (South American recluse spider).